Reading from the N-terminus, the 246-residue chain is Hydroxyacylglutathione hydrolase (246 aa).

7 residues coordinate Zn(2+): His58, His60, Asp62, His63, His117, Asp137, and His175.

It belongs to the metallo-beta-lactamase superfamily. Glyoxalase II family. In terms of assembly, monomer. Requires Zn(2+) as cofactor.

The enzyme catalyses an S-(2-hydroxyacyl)glutathione + H2O = a 2-hydroxy carboxylate + glutathione + H(+). The protein operates within secondary metabolite metabolism; methylglyoxal degradation; (R)-lactate from methylglyoxal: step 2/2. Thiolesterase that catalyzes the hydrolysis of S-D-lactoyl-glutathione to form glutathione and D-lactic acid. In Prochlorococcus marinus (strain MIT 9301), this protein is Hydroxyacylglutathione hydrolase.